The sequence spans 352 residues: C-C chemokine receptor type 5 (352 aa).

Residues 1–30 (MDYQVSSPIYDIDYGPSEPCRKIDVKQMGA) lie on the Extracellular side of the membrane. Tyr-3 bears the Sulfotyrosine mark. O-linked (GalNAc...) serine glycans are attached at residues Ser-6 and Ser-7. Residues Tyr-10 and Tyr-14 each carry the sulfotyrosine modification. Intrachain disulfides connect Cys-20/Cys-269 and Cys-101/Cys-178. The chain crosses the membrane as a helical span at residues 31–58 (QLLPPLYSLVFLFGFVGNMLVVLILINC). Over 59–68 (KRLKSMTDIY) the chain is Cytoplasmic. A helical membrane pass occupies residues 69 to 89 (LLNLAISDLLFLFTIPFWAHY). Residues 90–102 (AAGQWDFGNTMCQ) are Extracellular-facing. Residues 103-124 (FLTALYFIGFFSGIFFIILLTI) form a helical membrane-spanning segment. Residues 125 to 141 (DRYLAIVHAVFALKART) are Cytoplasmic-facing. A helical membrane pass occupies residues 142–166 (VTFGVVTSVITWVVAVFASLPGIIF). The Extracellular segment spans residues 167 to 198 (TRSQKEGYHYSCSPHFPFSQYRFWKNFETLKM). Residues 199-218 (VILGLVLPLLVMVICYSGIL) traverse the membrane as a helical segment. Residues 219-235 (KTLLRCRNEKKRHRAVR) are Cytoplasmic-facing. Residues 236 to 260 (LIFTIMIVYFLFWAPYNIVLLINTY) traverse the membrane as a helical segment. The Extracellular portion of the chain corresponds to 261–277 (PDFFGVNNCNSSNRLDQ). A helical transmembrane segment spans residues 278–301 (AMQVTETLGMTHCCVNPIIYAFVG). Residues 302–352 (EKFRNYLVIFFQKHIAKRFCKCCSIFQKEAPERANSVYTRSTGEQEISVGL) lie on the Cytoplasmic side of the membrane. S-palmitoyl cysteine attachment occurs at residues Cys-321, Cys-323, and Cys-324. A phosphoserine; by BARK1 mark is found at Ser-337, Ser-342, and Ser-349.

Belongs to the G-protein coupled receptor 1 family. As to quaternary structure, interacts with PRAF2. Efficient ligand binding to CCL3/MIP-1alpha and CCL4/MIP-1beta requires sulfation, O-glycosylation and sialic acid modifications. Glycosylation on Ser-6 is required for efficient binding of CCL4. Interacts with GRK2. Interacts with ARRB1 and ARRB2. Interacts with CNIH4. Interacts with S100A4; this interaction stimulates T-lymphocyte chemotaxis. Post-translationally, sulfated on at least 2 of the N-terminal tyrosines. Sulfation is required for efficient binding of the chemokines, CCL3 and CCL4. Palmitoylation in the C-terminal is important for cell surface expression. In terms of processing, phosphorylation on serine residues in the C-terminal is stimulated by binding CC chemokines especially by APO-RANTES. Post-translationally, O-glycosylated, but not N-glycosylated. Ser-6 appears to be the major site even if Ser-7 may be also O-glycosylated. Also sialylated glycans present which contribute to chemokine binding. Ser-17 may also be glycosylated and, if so, with small moieties such as a T-antigen.

Its subcellular location is the cell membrane. Its function is as follows. Receptor for a number of inflammatory CC-chemokines including CCL3/MIP-1-alpha, CCL4/MIP-1-beta and RANTES and subsequently transduces a signal by increasing the intracellular calcium ion level. May play a role in the control of granulocytic lineage proliferation or differentiation. Participates in T-lymphocyte migration to the infection site by acting as a chemotactic receptor. The sequence is that of C-C chemokine receptor type 5 (CCR5) from Saimiri sciureus (Common squirrel monkey).